Reading from the N-terminus, the 482-residue chain is Ribosomal RNA small subunit methyltransferase F (482 aa).

S-adenosyl-L-methionine-binding positions include 119-125, Glu-143, Asp-170, and Asp-188; that span reads ASAPGSK. The active-site Nucleophile is the Cys-241.

Belongs to the class I-like SAM-binding methyltransferase superfamily. RsmB/NOP family.

The protein localises to the cytoplasm. It catalyses the reaction cytidine(1407) in 16S rRNA + S-adenosyl-L-methionine = 5-methylcytidine(1407) in 16S rRNA + S-adenosyl-L-homocysteine + H(+). Its function is as follows. Specifically methylates the cytosine at position 1407 (m5C1407) of 16S rRNA. In Shewanella sp. (strain MR-7), this protein is Ribosomal RNA small subunit methyltransferase F.